A 475-amino-acid chain; its full sequence is MVPQTETKTGAGFKAGVKDYRLTYYTPDYVVSETDILAAFRMTPQPGVPPEECDAAVAAESSTGTWTTVWTDGLTSLDKYKGRCYDLEPVPGEENQYIAYVAYPIDLFEEGSVTNLFTSIVGNVFGFKALRALRLEDLRISPAYVKTFVGPPHGIQVERDKLNKYGRGLLGCTIKPKLGLSAKNYGRAVYECLRGGLDFTKDDENVNSQPFMRWRDRFLFVAEAIYKSQAETGEIKGHYLNATAGTAEGMLQRAQCAKELGVPIIMHDYLTGGFTANTSLAHYCRDHGLLLHIHRAMHAVIDRQRNHGIHFRVLAKTLRMSGGDHLHSGTVVGKLEGEREVTLGFVDLMRDNFVEKDRSRGIYFTQDWCSMPGVMPVASGGIHVWHMPALVEIFGDDACLQFGGGTLGHPWGNAPGAVANRVALEACTQARNEGRDLAREGGNVIRSACKWSPELAAACEVWKEIKFEFDTIDKL.

Residues 1 to 2 (MV) constitute a propeptide that is removed on maturation. Position 3 is an N-acetylproline (P3). N6,N6,N6-trimethyllysine is present on K14. Positions 123 and 173 each coordinate substrate. The Proton acceptor role is filled by K175. K177 contacts substrate. Residues K201, D203, and E204 each contribute to the Mg(2+) site. K201 bears the N6-carboxylysine mark. Catalysis depends on H294, which acts as the Proton acceptor. Residues R295, H327, and S379 each coordinate substrate.

The protein belongs to the RuBisCO large chain family. Type I subfamily. As to quaternary structure, heterohexadecamer of 8 large chains and 8 small chains. Mg(2+) is required as a cofactor.

It localises to the plastid. It is found in the chloroplast. It catalyses the reaction 2 (2R)-3-phosphoglycerate + 2 H(+) = D-ribulose 1,5-bisphosphate + CO2 + H2O. It carries out the reaction D-ribulose 1,5-bisphosphate + O2 = 2-phosphoglycolate + (2R)-3-phosphoglycerate + 2 H(+). RuBisCO catalyzes two reactions: the carboxylation of D-ribulose 1,5-bisphosphate, the primary event in carbon dioxide fixation, as well as the oxidative fragmentation of the pentose substrate in the photorespiration process. Both reactions occur simultaneously and in competition at the same active site. In Dunaliella tertiolecta (Green alga), this protein is Ribulose bisphosphate carboxylase large chain.